The chain runs to 147 residues: Hemoglobin subunit epsilon (147 aa).

The Globin domain maps to 3–147 (HFTAEEKSTI…VATALAHKYH (145 aa)). S14 and S51 each carry phosphoserine. Heme b is bound by residues H64 and H93.

The protein belongs to the globin family. As to quaternary structure, heterotetramer of two alpha chains and two epsilon chains in early embryonic hemoglobin Gower-2; two zeta chains and two epsilon chains in early embryonic hemoglobin Gower-1. Red blood cells.

Functionally, the epsilon chain is a beta-type chain of early mammalian embryonic hemoglobin. The chain is Hemoglobin subunit epsilon (HBE1) from Propithecus verreauxi (White sifaka).